The sequence spans 360 residues: UDP-N-acetylglucosamine--N-acetylmuramyl-(pentapeptide) pyrophosphoryl-undecaprenol N-acetylglucosamine transferase (360 aa).

UDP-N-acetyl-alpha-D-glucosamine contacts are provided by residues threonine 11–glycine 13, asparagine 120, arginine 161, serine 188, and glutamine 282.

Belongs to the glycosyltransferase 28 family. MurG subfamily.

The protein localises to the cell inner membrane. It catalyses the reaction di-trans,octa-cis-undecaprenyl diphospho-N-acetyl-alpha-D-muramoyl-L-alanyl-D-glutamyl-meso-2,6-diaminopimeloyl-D-alanyl-D-alanine + UDP-N-acetyl-alpha-D-glucosamine = di-trans,octa-cis-undecaprenyl diphospho-[N-acetyl-alpha-D-glucosaminyl-(1-&gt;4)]-N-acetyl-alpha-D-muramoyl-L-alanyl-D-glutamyl-meso-2,6-diaminopimeloyl-D-alanyl-D-alanine + UDP + H(+). It functions in the pathway cell wall biogenesis; peptidoglycan biosynthesis. In terms of biological role, cell wall formation. Catalyzes the transfer of a GlcNAc subunit on undecaprenyl-pyrophosphoryl-MurNAc-pentapeptide (lipid intermediate I) to form undecaprenyl-pyrophosphoryl-MurNAc-(pentapeptide)GlcNAc (lipid intermediate II). This Synechococcus sp. (strain RCC307) protein is UDP-N-acetylglucosamine--N-acetylmuramyl-(pentapeptide) pyrophosphoryl-undecaprenol N-acetylglucosamine transferase.